A 911-amino-acid chain; its full sequence is MPPRRSIVEVKVLDVQKRRVPNKHYVYIIRVTWSSGSTEAIYRRYSKFFDLQMQMLDKFPMEGGQKDPKQRIIPFLPGKILFRRSHIRDVAVKRLIPIDEYCKALIQLPPYISQCDEVLQFFETRPEDLNPPKEEHIGKKKSGGDQTSVDPMVLEQYVVVANYQKQESSEISLSVGQVVDIIEKNESGWWFVSTAEEQGWVPATCLEGQDGVQDEFSLQPEEEEKYTVIYPYTARDQDEMNLERGAVVEVIQKNLEGWWKIRYQGKEGWAPASYLKKNSGEPLPPKPGPGSPSHPGALDLDGVSRQQNAVGREKELLSSQRDGRFEGRPVPDGDAKQRSPKMRQRPPPRRDMTIPRGLNLPKPPIPPQVEEEYYTIAEFQTTIPDGISFQAGLKVEVIEKNLSGWWYIQIEDKEGWAPATFIDKYKKTSNASRPNFLAPLPHEVTQLRLGEAAALENNTGSEATGPSRPLPDAPHGVMDSGLPWSKDWKGSKDVLRKASSDMSASAGYEEISDPDMEEKPSLPPRKESIIKSEGELLERERERQRTEQLRGPTPKPPGVILPMMPAKHIPPARDSRRPEPKPDKSRLFQLKNDMGLECGHKVLAKEVKKPNLRPISKSKTDLPEEKPDATPQNPFLKSRPQVRPKPAPSPKTEPPQGEDQVDICNLRSKLRPAKSQDKSLLDGEGPQAVGGQDVAFSRSFLPGEGPGRAQDRTGKQDGLSPKEISCRAPPRPAKTTDPVSKSVPVPLQEAPQQRPVVPPRRPPPPKKTSSSSRPLPEVRGPQCEGHESRAAPTPGRALLVPPKAKPFLSNSLGGQDDTRGKGSLGPWGTGKIGENREKAAAASVPNADGLKDSLYVAVADFEGDKDTSSFQEGTVFEVREKNSSGWWFCQVLSGAPSWEGWIPSNYLRKKP.

The region spanning Arg-5–Leu-129 is the PX domain. A Phosphotyrosine modification is found at Tyr-25. SH3 domains follow at residues Met-152 to Gly-211 and Glu-221 to Gly-280. The disordered stretch occupies residues Leu-275–Pro-366. Ser-279 and Ser-291 each carry phosphoserine. Positions Pro-282–Pro-292 are enriched in pro residues. The segment covering Gly-311 to Gln-337 has biased composition (basic and acidic residues). Residues Arg-338–Pro-347 show a composition bias toward basic residues. Residues Gln-368–Lys-427 form the SH3 3 domain. The tract at residues Asn-458–Glu-834 is disordered. Composition is skewed to basic and acidic residues over residues Lys-486–Ser-499, Glu-517–Gln-548, Pro-571–Arg-586, Cys-598–Lys-609, and Ser-618–Asp-628. A phosphoserine mark is found at Ser-499 and Ser-528. Composition is skewed to pro residues over residues Arg-643 to Glu-653 and Val-756 to Lys-766. Residues Gly-822 to Lys-831 are compositionally biased toward gly residues. Ser-843 bears the Phosphoserine mark. The 62-residue stretch at Leu-850–Pro-911 folds into the SH3 4 domain.

It belongs to the SH3PXD2 family. In terms of assembly, interacts with ADAM15. Interacts with NOXO1. Interacts (via SH3 domains) with NOXA1; the interaction is direct. Interacts with FASLG. Post-translationally, phosphorylated in SRC-transformed cells. Expressed in fibroblasts.

Its subcellular location is the cytoplasm. It is found in the cell projection. It localises to the podosome. In terms of biological role, adapter protein involved in invadopodia and podosome formation and extracellular matrix degradation. Binds matrix metalloproteinases (ADAMs), NADPH oxidases (NOXs) and phosphoinositides. Acts as an organizer protein that allows NOX1- or NOX3-dependent reactive oxygen species (ROS) generation and ROS localization. Plays a role in mitotic clonal expansion during the immediate early stage of adipocyte differentiation. This is SH3 and PX domain-containing protein 2B (SH3PXD2B) from Homo sapiens (Human).